The primary structure comprises 467 residues: Glutamate--tRNA ligase (467 aa).

Residues 9–19 (PSPTGFLHIGG) carry the 'HIGH' region motif. Positions 250-254 (KLSKR) match the 'KMSKS' region motif. Lysine 253 provides a ligand contact to ATP.

It belongs to the class-I aminoacyl-tRNA synthetase family. Glutamate--tRNA ligase type 1 subfamily. As to quaternary structure, monomer.

It localises to the cytoplasm. It carries out the reaction tRNA(Glu) + L-glutamate + ATP = L-glutamyl-tRNA(Glu) + AMP + diphosphate. In terms of biological role, catalyzes the attachment of glutamate to tRNA(Glu) in a two-step reaction: glutamate is first activated by ATP to form Glu-AMP and then transferred to the acceptor end of tRNA(Glu). This is Glutamate--tRNA ligase from Mesomycoplasma hyopneumoniae (strain J / ATCC 25934 / NCTC 10110) (Mycoplasma hyopneumoniae).